Reading from the N-terminus, the 284-residue chain is Tropomyosin Lep s 1.0101 (284 aa).

Residues methionine 1–glutamate 273 are a coiled coil. A compositionally biased stretch (basic and acidic residues) spans alanine 155–glutamine 171. Residues alanine 155–aspartate 187 are disordered.

The protein belongs to the tropomyosin family. Homodimer.

In terms of biological role, tropomyosin, in association with the troponin complex, plays a central role in the calcium dependent regulation of muscle contraction. The protein is Tropomyosin Lep s 1.0101 of Lepisma saccharinum (Silverfish).